We begin with the raw amino-acid sequence, 277 residues long: Indole-3-glycerol phosphate synthase (277 aa).

This sequence belongs to the TrpC family.

It catalyses the reaction 1-(2-carboxyphenylamino)-1-deoxy-D-ribulose 5-phosphate + H(+) = (1S,2R)-1-C-(indol-3-yl)glycerol 3-phosphate + CO2 + H2O. It functions in the pathway amino-acid biosynthesis; L-tryptophan biosynthesis; L-tryptophan from chorismate: step 4/5. In Pseudomonas putida (strain ATCC 47054 / DSM 6125 / CFBP 8728 / NCIMB 11950 / KT2440), this protein is Indole-3-glycerol phosphate synthase.